The following is a 598-amino-acid chain: uncharacterized protein (598 aa).

Over residues 1–19 (MSVPLRFSTPSSSPSASDN) the composition is skewed to low complexity. Disordered regions lie at residues 1–54 (MSVP…MRPK), 139–176 (QKNQEARSRANSRVNSRANSRANSSVSLAGMDGSPNWK), and 194–279 (EAQL…ITMP). Topologically, residues 1–313 (MSVPLRFSTP…CKIRHFFREG (313 aa)) are cytoplasmic. Over residues 30–48 (ELDTFNTTDVPRRVNTTKA) the composition is skewed to polar residues. Residues 147-165 (RANSRVNSRANSRANSSVS) show a composition bias toward low complexity. 2 stretches are compositionally biased toward polar residues: residues 218–242 (FSLQSSRQPSIAEEQPQTQRKSSAI) and 255–276 (PRNNVSFSRKPSIAEQDSSQDI). A helical membrane pass occupies residues 314–334 (FAEFLGTLVLVVFGVGSNLQA). Residues 335–346 (TVTNGAGGSFES) are Extracellular-facing. Residues 347–367 (LSFAWGFGCMLGVYIAGGISG) form a helical membrane-spanning segment. The Cytoplasmic segment spans residues 368-388 (GHVNPAVTISLAIFRKFPWYK). The NPA 1 motif lies at 371-373 (NPA). Residues 389-409 (VPIYIFFQIWGAFFGGALAYG) form a helical membrane-spanning segment. The Extracellular portion of the chain corresponds to 410–444 (YHWSSITEFEGGKDIRTPATGGCLYTNPKPYVTWR). The chain crosses the membrane as a helical span at residues 445–465 (NAFFDEFIGTAVLVGCLFAIL). Residues 466 to 473 (DDTNSPPT) lie on the Cytoplasmic side of the membrane. A helical membrane pass occupies residues 474 to 494 (QGMTAFIVGLLIAAIGMALGY). Residues 495 to 532 (QTSFTLNPARDLGPRMFAWWIGYGPHSFHLYHWWWTWG) are Extracellular-facing. The NPA 2 motif lies at 501 to 503 (NPA). A helical membrane pass occupies residues 533-553 (AWGGTIGGGIAGGLIYDLVIF). Residues 554–598 (TGPESPLNYPDNGFIDKKVHQITAKFEKEEEVENLEKTDSPIENN) are Cytoplasmic-facing.

Belongs to the MIP/aquaporin (TC 1.A.8) family.

Its subcellular location is the membrane. This is an uncharacterized protein from Schizosaccharomyces pombe (strain 972 / ATCC 24843) (Fission yeast).